A 123-amino-acid polypeptide reads, in one-letter code: Protein Wnt-7b (123 aa).

S1 is lipidated: O-palmitoleoyl serine; by PORCN. Positions 33 to 61 (VEVVRASRLRQPTFLKIKQIKSYQKPMET) are disordered linker. An intrachain disulfide couples C89 to C104. N-linked (GlcNAc...) asparagine glycosylation occurs at N90.

Belongs to the Wnt family. Post-translationally, palmitoleoylation is required for efficient binding to frizzled receptors. Depalmitoleoylation leads to Wnt signaling pathway inhibition.

The protein localises to the secreted. It is found in the extracellular space. Its subcellular location is the extracellular matrix. Functionally, ligand for members of the frizzled family of seven transmembrane receptors that functions in the canonical Wnt/beta-catenin signaling pathway. Required for normal fusion of the chorion and the allantois during placenta development. Required for central nervous system (CNS) angiogenesis and blood-brain barrier regulation. The chain is Protein Wnt-7b (WNT7B) from Anser caerulescens (Snow goose).